The following is a 255-amino-acid chain: TIR domain-containing protein (255 aa).

The region spanning L9 to L185 is the TIR domain. Residue E83 is part of the active site. A run of 2 helical transmembrane segments spans residues A195–P215 and F223–W243. A KASH domain is found at L201–S255.

Forms homomers. Interacts with SUN1, SUN2, SUN3, SUN4 and SUN5.

The protein resides in the nucleus membrane. It catalyses the reaction NAD(+) + H2O = ADP-D-ribose + nicotinamide + H(+). Could play a role in nuclear morphology, specifically nuclear size. This is TIR domain-containing protein from Arabidopsis thaliana (Mouse-ear cress).